The chain runs to 316 residues: Thymidylate synthase (316 aa).

Residues arginine 23 and 178-179 (RR) each bind dUMP. Residue cysteine 198 is the Nucleophile of the active site. Residues 218–221 (RSGD), asparagine 229, and 259–261 (HIY) each bind dUMP. Aspartate 221 contacts (6R)-5,10-methylene-5,6,7,8-tetrahydrofolate. A (6R)-5,10-methylene-5,6,7,8-tetrahydrofolate-binding site is contributed by alanine 315.

The protein belongs to the thymidylate synthase family. Bacterial-type ThyA subfamily. As to quaternary structure, homodimer.

Its subcellular location is the cytoplasm. The enzyme catalyses dUMP + (6R)-5,10-methylene-5,6,7,8-tetrahydrofolate = 7,8-dihydrofolate + dTMP. The protein operates within pyrimidine metabolism; dTTP biosynthesis. Functionally, catalyzes the reductive methylation of 2'-deoxyuridine-5'-monophosphate (dUMP) to 2'-deoxythymidine-5'-monophosphate (dTMP) while utilizing 5,10-methylenetetrahydrofolate (mTHF) as the methyl donor and reductant in the reaction, yielding dihydrofolate (DHF) as a by-product. This enzymatic reaction provides an intracellular de novo source of dTMP, an essential precursor for DNA biosynthesis. The sequence is that of Thymidylate synthase from Lactiplantibacillus plantarum (strain ATCC BAA-793 / NCIMB 8826 / WCFS1) (Lactobacillus plantarum).